A 216-amino-acid chain; its full sequence is Large ribosomal subunit protein uL4 (216 aa).

The disordered stretch occupies residues 51-78; the sequence is KGRSEVHGSNTKPYKQKGTGRARRGDKK. The span at 64–76 shows a compositional bias: basic residues; it reads YKQKGTGRARRGD.

Belongs to the universal ribosomal protein uL4 family. Part of the 50S ribosomal subunit.

Its function is as follows. One of the primary rRNA binding proteins, this protein initially binds near the 5'-end of the 23S rRNA. It is important during the early stages of 50S assembly. It makes multiple contacts with different domains of the 23S rRNA in the assembled 50S subunit and ribosome. In terms of biological role, forms part of the polypeptide exit tunnel. In Treponema pallidum (strain Nichols), this protein is Large ribosomal subunit protein uL4.